We begin with the raw amino-acid sequence, 518 residues long: uncharacterized protein (518 aa).

A signal peptide spans 1–21 (MWKWKVILLFLAEMFVSGVNG). N-linked (GlcNAc...) asparagine glycosylation is found at Asn-30, Asn-142, Asn-295, Asn-342, Asn-362, Asn-410, and Asn-503. The 129-residue stretch at 389–517 (CPPFGITNSV…RGFWVSITPQ (129 aa)) folds into the CUB domain.

The protein resides in the secreted. This is an uncharacterized protein from Caenorhabditis elegans.